A 517-amino-acid polypeptide reads, in one-letter code: MEDVLTLITMIVLLLLAFHGFGKCSSDLYSRSDFPEGFVFGAGISAYQWEGAVDEDGRKPSVWDTFLHCRKMDNGDIACDGYHKYKEDVQLMAETGLHTFRFSISWSRLISNGRGSINPKGLQFYKNFIQELVKHGIEPHVTLHHYDFPQYLEDDYGGWTNRKIIKDFTAYADVCFREFGNHVKFWTTINEANIFTIGGYNDGNSPPGRCSFPGRNCTLGNSSTETYIVGHNLLLAHASVSRLYKQKYKDIQGGSVGFSLFAMNFTPSTNSKDDEIATKRANDFYLGWMLEPLIYGDYPDVMKRTIGSRLPVFSKEESEQVKGSSDFIGVIHYLTALVTNIDINPSLSGIPDFNSDMGESINILSMRVRISRLPNSDEKCLIFFITLSILEYIKQSYGNPPVYILENGKTMNQDLELQQKDTPRIEYLDAYIGAVLKAVRNGSDTRGYFVWSFMDLYELLNGYKSSFGLYSVNFSDPHRKRSPKLSAHWYSGFLKGKPTFLGSQGITQLHSNFSSSR.

The N-terminal stretch at 1–22 (MEDVLTLITMIVLLLLAFHGFG) is a signal peptide. A beta-D-glucoside is bound by residues Q48, H145, and 190 to 191 (NE). E191 acts as the Proton donor in catalysis. C210 and C217 are disulfide-bonded. N-linked (GlcNAc...) asparagine glycans are attached at residues N216 and N221. 2 residues coordinate a beta-D-glucoside: Y333 and E406. The active-site Nucleophile is the E406. N-linked (GlcNAc...) asparagine glycosylation is present at N441. W451 and F467 together coordinate a beta-D-glucoside. 2 N-linked (GlcNAc...) asparagine glycosylation sites follow: N473 and N512.

It belongs to the glycosyl hydrolase 1 family.

The enzyme catalyses Hydrolysis of terminal, non-reducing beta-D-glucosyl residues with release of beta-D-glucose.. The polypeptide is Beta-glucosidase 1 (Arabidopsis thaliana (Mouse-ear cress)).